The chain runs to 393 residues: Lysophosphatidic acid receptor 1 (393 aa).

Over 1 to 50 (MAAASTSSPVVSQPQFTAMNEPQCFYNESIAFFYNRSGKYLATEWNTVSK) the chain is Extracellular. Disulfide bonds link Cys-24–Cys-190 and Cys-188–Cys-195. 2 N-linked (GlcNAc...) asparagine glycosylation sites follow: Asn-27 and Asn-35. Lys-39 serves as a coordination point for a 1-acyl-sn-glycero-3-phosphate. Residues 51–75 (LVMGLGITVCIFIMLANLLVMVAIY) traverse the membrane as a helical segment. Residues 76–83 (VNRRFHFP) are Cytoplasmic-facing. The chain crosses the membrane as a helical span at residues 84–107 (IYYLMANLAAADFFAGLAYFYLMF). At 108 to 121 (NTGPNTRRLTVSTW) the chain is on the extracellular side. The helical transmembrane segment at 122–144 (LLRQGLIDTTVTASVANLLAIAI) threads the bilayer. 124–129 (RQGLID) contacts a 1-acyl-sn-glycero-3-phosphate. The Cytoplasmic portion of the chain corresponds to 145 to 163 (ERHITVFRMQLHTRMSNRR). The helical transmembrane segment at 164-184 (VVVVIVVIWTMAIVMGAIPSV) threads the bilayer. Residues 185–204 (GWNCICDIENCSNMAPLYSD) are Extracellular-facing. The helical transmembrane segment at 205-225 (SYLVFWAIFNLVTFVVMVVLY) threads the bilayer. Trp-210 lines the a 1-acyl-sn-glycero-3-phosphate pocket. Topologically, residues 226 to 255 (AHIFGYVRQRTMRMSRHSSGPRRNRDTMMS) are cytoplasmic. The helical transmembrane segment at 256–280 (LLKTVVIVLGAFIICWTPGLVLLLL) threads the bilayer. Residues 281-294 (DVCCPQCDVLAYEK) lie on the Extracellular side of the membrane. An intrachain disulfide couples Cys-284 to Cys-287. Residues 295–315 (FFLLLAEFNSAMNPIIYSYRD) traverse the membrane as a helical segment. Residues 316–393 (KEMSATFRQI…PPERPGQGRV (78 aa)) are Cytoplasmic-facing. Ser-341 carries the post-translational modification Phosphoserine. Residue Thr-351 is modified to Phosphothreonine. Positions 369-381 (KMRGGHHLLRDEQ) are enriched in basic and acidic residues. The tract at residues 369–393 (KMRGGHHLLRDEQPPPPERPGQGRV) is disordered.

Belongs to the G-protein coupled receptor 1 family. Interacts with RALA and GRK2. Interacts with GNAQ and GNA13. Interacts with CD14; the interaction is enhanced by exposure to bacterial lipopolysaccharide (LPS). N-glycosylated. Detected in brain cortex and in pituitary pars tuberalis.

Its subcellular location is the cell surface. It is found in the cell membrane. It localises to the endosome. In terms of biological role, receptor for lysophosphatidic acid (LPA). Plays a role in the reorganization of the actin cytoskeleton, cell migration, differentiation and proliferation, and thereby contributes to the responses to tissue damage and infectious agents. Activates downstream signaling cascades via the G(i)/G(o), G(12)/G(13), and G(q) families of heteromeric G proteins. Signaling inhibits adenylyl cyclase activity and decreases cellular cAMP levels. Signaling triggers an increase of cytoplasmic Ca(2+) levels. Activates RALA; this leads to the activation of phospholipase C (PLC) and the formation of inositol 1,4,5-trisphosphate. Signaling mediates activation of down-stream MAP kinases. Contributes to the regulation of cell shape. Promotes Rho-dependent reorganization of the actin cytoskeleton in neuronal cells and neurite retraction. Promotes the activation of Rho and the formation of actin stress fibers. Promotes formation of lamellipodia at the leading edge of migrating cells via activation of RAC1. Through its function as LPA receptor, plays a role in chemotaxis and cell migration, including responses to injury and wounding. Plays a role in triggering inflammation in response to bacterial lipopolysaccharide (LPS) via its interaction with CD14. Promotes cell proliferation in response to LPA. Inhibits the intracellular ciliogenesis pathway in response to LPA and through AKT1 activation. Required for normal skeleton development. May play a role in osteoblast differentiation. Required for normal brain development. Required for normal proliferation, survival and maturation of newly formed neurons in the adult dentate gyrus. Plays a role in pain perception and in the initiation of neuropathic pain. The protein is Lysophosphatidic acid receptor 1 (LPAR1) of Ovis aries (Sheep).